The sequence spans 312 residues: MRLVFAGTPEFARIALDALLAAGHDVPLVLTQPDRPAGRGLKLTPSPVKQAALAAGIGVAQPRSLRLDGRYPDEAAAARAQLERVAPDVMVVAAYGLILPQWTLDLPRLGCLNIHASLLPRWRGAAPIQRAIEAGDAETGVTIMQMDAGLDTGDMLLERAVPIGAQQTAAQLHDELALAGGQAIVDALAALGQGGLAPRRQPDAGVTYAAKLDKAEAALDCSLPAAVLARRVRAFNPVPGATIRLPGLDDPVKVWRAQALEQAAGGPPGAVLRADAQGIDIATGQGVLRLLELQKAGGKRQPVDVFVRGWQP.

117-120 is a binding site for (6S)-5,6,7,8-tetrahydrofolate; the sequence is SLLP.

The protein belongs to the Fmt family.

The catalysed reaction is L-methionyl-tRNA(fMet) + (6R)-10-formyltetrahydrofolate = N-formyl-L-methionyl-tRNA(fMet) + (6S)-5,6,7,8-tetrahydrofolate + H(+). In terms of biological role, attaches a formyl group to the free amino group of methionyl-tRNA(fMet). The formyl group appears to play a dual role in the initiator identity of N-formylmethionyl-tRNA by promoting its recognition by IF2 and preventing the misappropriation of this tRNA by the elongation apparatus. The protein is Methionyl-tRNA formyltransferase of Bordetella parapertussis (strain 12822 / ATCC BAA-587 / NCTC 13253).